Here is a 690-residue protein sequence, read N- to C-terminus: Probable serine/threonine-protein kinase drkB (690 aa).

The N-terminal stretch at Met-1–Ser-24 is a signal peptide. The tract at residues Asp-51–Pro-110 is disordered. Over residues His-57 to Asp-96 the composition is skewed to low complexity. The span at Ala-97 to Pro-107 shows a compositional bias: polar residues. N-linked (GlcNAc...) asparagine glycans are attached at residues Asn-134, Asn-180, Asn-220, and Asn-250. The segment at Thr-287 to Ser-335 is disordered. The span at Pro-296–Ser-323 shows a compositional bias: low complexity. Residues Ile-346–Ile-366 traverse the membrane as a helical segment. The 254-residue stretch at Ile-391–Ile-644 folds into the Protein kinase domain. ATP is bound by residues Ile-397–Val-405 and Lys-418. Catalysis depends on Asp-514, which acts as the Proton acceptor. The tract at residues Phe-649–Asn-690 is disordered. A compositionally biased stretch (low complexity) spans Asn-655 to Asp-681.

This sequence belongs to the protein kinase superfamily. TKL Ser/Thr protein kinase family.

It is found in the membrane. The enzyme catalyses L-seryl-[protein] + ATP = O-phospho-L-seryl-[protein] + ADP + H(+). The catalysed reaction is L-threonyl-[protein] + ATP = O-phospho-L-threonyl-[protein] + ADP + H(+). This is Probable serine/threonine-protein kinase drkB (drkB) from Dictyostelium discoideum (Social amoeba).